Here is a 238-residue protein sequence, read N- to C-terminus: Ribonuclease PH (238 aa).

Residues arginine 86 and 124-126 (GTR) contribute to the phosphate site.

Belongs to the RNase PH family. Homohexameric ring arranged as a trimer of dimers.

The catalysed reaction is tRNA(n+1) + phosphate = tRNA(n) + a ribonucleoside 5'-diphosphate. Functionally, phosphorolytic 3'-5' exoribonuclease that plays an important role in tRNA 3'-end maturation. Removes nucleotide residues following the 3'-CCA terminus of tRNAs; can also add nucleotides to the ends of RNA molecules by using nucleoside diphosphates as substrates, but this may not be physiologically important. Probably plays a role in initiation of 16S rRNA degradation (leading to ribosome degradation) during starvation. The sequence is that of Ribonuclease PH from Psychrobacter sp. (strain PRwf-1).